The primary structure comprises 397 residues: Anhydro-N-acetylmuramic acid kinase (397 aa).

Position 9–16 (9–16 (GTSYDAID)) interacts with ATP.

Belongs to the anhydro-N-acetylmuramic acid kinase family.

It carries out the reaction 1,6-anhydro-N-acetyl-beta-muramate + ATP + H2O = N-acetyl-D-muramate 6-phosphate + ADP + H(+). The protein operates within amino-sugar metabolism; 1,6-anhydro-N-acetylmuramate degradation. It functions in the pathway cell wall biogenesis; peptidoglycan recycling. Catalyzes the specific phosphorylation of 1,6-anhydro-N-acetylmuramic acid (anhMurNAc) with the simultaneous cleavage of the 1,6-anhydro ring, generating MurNAc-6-P. Is required for the utilization of anhMurNAc either imported from the medium or derived from its own cell wall murein, and thus plays a role in cell wall recycling. This Rhodococcus erythropolis (strain PR4 / NBRC 100887) protein is Anhydro-N-acetylmuramic acid kinase.